Here is a 94-residue protein sequence, read N- to C-terminus: Acylphosphatase (94 aa).

An Acylphosphatase-like domain is found at 8–94 (RFTARVVGRV…QGDLADFRRK (87 aa)). Catalysis depends on residues Arg-23 and Asn-41.

This sequence belongs to the acylphosphatase family.

It catalyses the reaction an acyl phosphate + H2O = a carboxylate + phosphate + H(+). The sequence is that of Acylphosphatase (acyP) from Frankia alni (strain DSM 45986 / CECT 9034 / ACN14a).